The primary structure comprises 464 residues: Myrosinase 1 (464 aa).

Gln19 provides a ligand contact to substrate. Positions 39 and 52 each coordinate Zn(2+). The substrate site is built by His122 and Asn166. Residue Glu167 is the Nucleophile of the active site. Glu374 (proton donor) is an active-site residue. An N-linked (GlcNAc...) asparagine glycan is attached at Asn397.

As to quaternary structure, homodimer. In terms of tissue distribution, expressed in the skeletal muscle tissues surrounding the head, abdomen and thorax. Not expressed in flight muscles (at protein level).

It catalyses the reaction a thioglucoside + H2O = a sugar + a thiol.. Its function is as follows. Hydrolyzes glucosinolates to a labile aglycone. This rapidly undergoes spontaneous rearrangement, eliminating sulfur to yield a number of toxic metabolites. Thereby developing a chemical defense system that exploits and mimics the host plant. The chain is Myrosinase 1 from Brevicoryne brassicae (Mealy cabbage aphid).